A 178-amino-acid chain; its full sequence is MSENQNPSPSPEEIEAAMSANAADELNRLQGELAELKAKSADLADQFLRAKAEAENARRRAEDEVAKARKFGIESFAESLLPVCDSLDAALAIENATAEQLREGSDATLRQLMSALERNKVVIVNPEAGTKFDPHQHQAISMVPADQEANTVVSVLQKGYLISDRVLRPALVTVAAPK.

Residues 1 to 22 (MSENQNPSPSPEEIEAAMSANA) form a disordered region.

It belongs to the GrpE family. As to quaternary structure, homodimer.

The protein localises to the cytoplasm. In terms of biological role, participates actively in the response to hyperosmotic and heat shock by preventing the aggregation of stress-denatured proteins, in association with DnaK and GrpE. It is the nucleotide exchange factor for DnaK and may function as a thermosensor. Unfolded proteins bind initially to DnaJ; upon interaction with the DnaJ-bound protein, DnaK hydrolyzes its bound ATP, resulting in the formation of a stable complex. GrpE releases ADP from DnaK; ATP binding to DnaK triggers the release of the substrate protein, thus completing the reaction cycle. Several rounds of ATP-dependent interactions between DnaJ, DnaK and GrpE are required for fully efficient folding. The chain is Protein GrpE from Acidovorax ebreus (strain TPSY) (Diaphorobacter sp. (strain TPSY)).